We begin with the raw amino-acid sequence, 211 residues long: UPF0502 protein PC1_1804 (211 aa).

Residues 168-188 (SGDASDAAPEEEGAGDNSHQL) are disordered.

The protein belongs to the UPF0502 family.

The polypeptide is UPF0502 protein PC1_1804 (Pectobacterium carotovorum subsp. carotovorum (strain PC1)).